Reading from the N-terminus, the 145-residue chain is Small ribosomal subunit protein uS17c (145 aa).

The N-terminal 36 residues, 1 to 36 (MLLTTPFVSSPVRVQGNGGSGASPWAGAATALRIQA), are a transit peptide targeting the chloroplast. Residues 101–145 (KTKHFLAVPLPPRDTRRKSQLLPPLQSQSQSQDQDQPPTPPPSSD) form a disordered region. A compositionally biased stretch (low complexity) spans 120-136 (QLLPPLQSQSQSQDQDQ).

It belongs to the universal ribosomal protein uS17 family. Part of the 30S ribosomal subunit.

The protein resides in the plastid. It localises to the chloroplast. Functionally, one of the primary rRNA binding proteins, it binds specifically to the 5'-end of 16S ribosomal RNA. This chain is Small ribosomal subunit protein uS17c (RPS17), found in Oryza sativa subsp. japonica (Rice).